The sequence spans 919 residues: Periodic tryptophan protein 2 homolog (919 aa).

WD repeat units lie at residues 12 to 50 (GTVY…SDTL), 53 to 93 (ATRY…LHHF), 94 to 132 (HFKG…REFN), 142 to 181 (GPYD…NLIY), and 186 to 225 (GHKD…EGLR). A disordered region spans residues 238-267 (QREEEEEEEEDQEGDRETTIRGKATPAEEE). Over residues 240 to 251 (EEEEEEEEDQEG) the composition is skewed to acidic residues. Residues 252–267 (DRETTIRGKATPAEEE) show a composition bias toward basic and acidic residues. 9 WD repeats span residues 286-325 (GDFN…LIHS), 328-368 (ISDQ…YVLK), 371-410 (GHFN…CFVT), 413-452 (EHSS…NFRT), 456-498 (PRPT…DVLS), 499-538 (GHEG…RTKE), 541-580 (ALTS…QTGS), 603-642 (AKGK…LMKR), and 700-740 (KPEI…DPFE). Positions 882–919 (TKRSLDPLGSEEEAEASEDDSLHLLGGGGRDSEEEMLA) are disordered. Residues 890-900 (GSEEEAEASED) are compositionally biased toward acidic residues. A phosphoserine mark is found at Ser898 and Ser902.

This sequence belongs to the WD repeat PWP2 family. Part of the small subunit (SSU) processome, composed of more than 70 proteins and the RNA chaperone small nucleolar RNA (snoRNA) U3.

It is found in the nucleus. The protein localises to the nucleolus. Part of the small subunit (SSU) processome, first precursor of the small eukaryotic ribosomal subunit. During the assembly of the SSU processome in the nucleolus, many ribosome biogenesis factors, an RNA chaperone and ribosomal proteins associate with the nascent pre-rRNA and work in concert to generate RNA folding, modifications, rearrangements and cleavage as well as targeted degradation of pre-ribosomal RNA by the RNA exosome. This Homo sapiens (Human) protein is Periodic tryptophan protein 2 homolog.